The chain runs to 154 residues: Ribosome maturation factor RimP (154 aa).

It belongs to the RimP family.

It localises to the cytoplasm. Required for maturation of 30S ribosomal subunits. The chain is Ribosome maturation factor RimP from Salmonella agona (strain SL483).